A 118-amino-acid polypeptide reads, in one-letter code: Myotrophin (118 aa).

Cys2 carries the N-acetylcysteine modification. The ANK 1 repeat unit spans residues 2–30 (CDKEFMWALKNGDLDEVKDYVAKGEDVNR). 3 positions are modified to N6-acetyllysine: Lys4, Lys11, and Lys24. Thr31 carries the phosphothreonine modification. ANK repeat units lie at residues 34-66 (GGRK…APDK) and 67-99 (HHIT…VKGP).

This sequence belongs to the myotrophin family. In terms of assembly, interacts with RELA. Interacts with the heterodimer formed by CAPZA1 and CAPZB.

The protein resides in the cytoplasm. Its subcellular location is the nucleus. The protein localises to the perinuclear region. Promotes dimerization of NF-kappa-B subunits and regulates NF-kappa-B transcription factor activity. Promotes growth of cardiomyocytes, but not cardiomyocyte proliferation. Promotes cardiac muscle hypertrophy. Plays a role in the regulation of the growth of actin filaments. Inhibits the activity of the F-actin-capping protein complex formed by the CAPZA1 and CAPZB heterodimer. The polypeptide is Myotrophin (MTPN) (Bos taurus (Bovine)).